A 54-amino-acid chain; its full sequence is Ovomucoid (54 aa).

In terms of domain architecture, Kazal-like spans 4 to 54 (VDCSDYPRPDCTLEYMPLCGSDNKTYGNKCNFCNAVVDSNGTLTLSHFGKC). Intrachain disulfides connect Cys-6/Cys-36, Cys-14/Cys-33, and Cys-22/Cys-54. Residue Asn-43 is glycosylated (N-linked (GlcNAc...) asparagine).

Its subcellular location is the secreted. The polypeptide is Ovomucoid (Dendrocygna eytoni (Plumed whistling-duck)).